The sequence spans 91 residues: Mercuric transport protein periplasmic component (91 aa).

The N-terminal stretch at 1–19 (MKKLLSALALAAVVAPVWA) is a signal peptide. Positions 22 to 88 (QTVTLSVPGM…ATEDAGYPSS (67 aa)) constitute an HMA domain. The Hg(2+) site is built by C33 and C36.

This sequence belongs to the MerP family. Monomer.

Its subcellular location is the periplasm. Involved in mercury resistance. Acts as a mercury scavenger that specifically binds to a mercuric ion in the periplasm and probably passes it to the cytoplasmic mercuric reductase MerA via the mercuric transport protein MerT. This Pseudomonas fluorescens protein is Mercuric transport protein periplasmic component.